Here is a 93-residue protein sequence, read N- to C-terminus: Exodeoxyribonuclease 7 small subunit (93 aa).

Residues 61 to 75 (IDDNGDEKVYEKQTD) are compositionally biased toward basic and acidic residues. The interval 61-93 (IDDNGDEKVYEKQTDDPSNNGGGNRGFGSADEQ) is disordered.

It belongs to the XseB family. In terms of assembly, heterooligomer composed of large and small subunits.

The protein localises to the cytoplasm. It catalyses the reaction Exonucleolytic cleavage in either 5'- to 3'- or 3'- to 5'-direction to yield nucleoside 5'-phosphates.. Functionally, bidirectionally degrades single-stranded DNA into large acid-insoluble oligonucleotides, which are then degraded further into small acid-soluble oligonucleotides. This Limosilactobacillus reuteri (strain DSM 20016) (Lactobacillus reuteri) protein is Exodeoxyribonuclease 7 small subunit.